We begin with the raw amino-acid sequence, 94 residues long: Co-chaperonin GroES (94 aa).

Belongs to the GroES chaperonin family. In terms of assembly, heptamer of 7 subunits arranged in a ring. Interacts with the chaperonin GroEL.

The protein resides in the cytoplasm. Its function is as follows. Together with the chaperonin GroEL, plays an essential role in assisting protein folding. The GroEL-GroES system forms a nano-cage that allows encapsulation of the non-native substrate proteins and provides a physical environment optimized to promote and accelerate protein folding. GroES binds to the apical surface of the GroEL ring, thereby capping the opening of the GroEL channel. The polypeptide is Co-chaperonin GroES (Bacillus mycoides (strain KBAB4) (Bacillus weihenstephanensis)).